Here is a 279-residue protein sequence, read N- to C-terminus: NAD-dependent protein deacylase (279 aa).

A Deacetylase sirtuin-type domain is found at 20 to 272 (RERLRQRIFF…PEFVEKLLKG (253 aa)). 48–67 (GAGISAESGIRTFRAADGLW) provides a ligand contact to NAD(+). The substrate site is built by Tyr92 and Arg95. 129 to 132 (QNID) contributes to the NAD(+) binding site. Residue His147 is the Proton acceptor of the active site. The Zn(2+) site is built by Cys155 and Cys174. NAD(+) contacts are provided by residues 214–216 (GTS), 240–242 (NLE), and Ala258.

It belongs to the sirtuin family. Class III subfamily. Forms a 1:1 complex with acetyl-CoA synthetase (Acs). It depends on Zn(2+) as a cofactor.

It is found in the cytoplasm. It carries out the reaction N(6)-acetyl-L-lysyl-[protein] + NAD(+) + H2O = 2''-O-acetyl-ADP-D-ribose + nicotinamide + L-lysyl-[protein]. The catalysed reaction is N(6)-succinyl-L-lysyl-[protein] + NAD(+) + H2O = 2''-O-succinyl-ADP-D-ribose + nicotinamide + L-lysyl-[protein]. The enzyme catalyses N(6)-(2-hydroxyisobutanoyl)-L-lysyl-[protein] + NAD(+) + H2O = 2''-O-(2-hydroxyisobutanoyl)-ADP-D-ribose + nicotinamide + L-lysyl-[protein]. Its activity is regulated as follows. Deacetylation is inhibited by nicotinamide. In terms of biological role, NAD-dependent lysine deacetylase that specifically removes acetyl groups on target proteins. Also acts as a protein-lysine deacylase by mediating protein desuccinylation and de-2-hydroxyisobutyrylation. Modulates the activities of several proteins which are inactive in their acylated form. Activates the enzyme acetyl-CoA synthetase (acs) by deacetylating 'Lys-609' in the inactive, acetylated form of the enzyme. May also modulate the activity of other propionyl-adenosine monophosphate (AMP)-forming enzymes. This is NAD-dependent protein deacylase from Escherichia coli (strain K12).